The sequence spans 470 residues: Neuraminidase (470 aa).

Topologically, residues 1-6 are intravirion; sequence MNPNQK. Residues 7–27 traverse the membrane as a helical segment; it reads IITIGSICMTIGTISLILQIG. The tract at residues 11 to 33 is involved in apical transport and lipid raft association; sequence GSICMTIGTISLILQIGNIISIW. Over 28–470 the chain is Virion surface; that stretch reads NIISIWISHS…GAELPFTIDM (443 aa). A hypervariable stalk region region spans residues 36 to 90; that stretch reads HSIQTGSQNHTGICNQRIITYENNTWVNQTYVNISNTNVVAGKDTTSMILAGNSS. N-linked (GlcNAc...) asparagine; by host glycosylation is found at Asn-44, Asn-58, Asn-63, Asn-68, and Asn-88. The tract at residues 91–470 is head of neuraminidase; sequence LCPIRGWAIY…GAELPFTIDM (380 aa). Cystine bridges form between Cys-92/Cys-417, Cys-124/Cys-129, Cys-184/Cys-231, Cys-233/Cys-238, Cys-279/Cys-292, Cys-281/Cys-290, Cys-318/Cys-335, and Cys-421/Cys-447. Arg-118 is a substrate binding site. Asn-146 carries an N-linked (GlcNAc...) asparagine; by host glycan. The active-site Proton donor/acceptor is Asp-151. Residue Arg-152 participates in substrate binding. An N-linked (GlcNAc...) asparagine; by host glycan is attached at Asn-235. 277–278 serves as a coordination point for substrate; sequence EE. Arg-293 serves as a coordination point for substrate. Ca(2+) is bound by residues Asp-294, Gly-298, and Asp-324. The N-linked (GlcNAc...) asparagine; by host glycan is linked to Asn-365. Arg-368 contributes to the substrate binding site. Tyr-402 serves as the catalytic Nucleophile. A glycan (N-linked (GlcNAc...) asparagine; by host) is linked at Asn-455.

Belongs to the glycosyl hydrolase 34 family. As to quaternary structure, homotetramer. Ca(2+) is required as a cofactor. Post-translationally, N-glycosylated.

The protein resides in the virion membrane. The protein localises to the host apical cell membrane. The enzyme catalyses Hydrolysis of alpha-(2-&gt;3)-, alpha-(2-&gt;6)-, alpha-(2-&gt;8)- glycosidic linkages of terminal sialic acid residues in oligosaccharides, glycoproteins, glycolipids, colominic acid and synthetic substrates.. With respect to regulation, inhibited by the neuraminidase inhibitors zanamivir (Relenza) and oseltamivir (Tamiflu). These drugs interfere with the release of progeny virus from infected cells and are effective against all influenza strains. Resistance to neuraminidase inhibitors is quite rare. Functionally, catalyzes the removal of terminal sialic acid residues from viral and cellular glycoconjugates. Cleaves off the terminal sialic acids on the glycosylated HA during virus budding to facilitate virus release. Additionally helps virus spread through the circulation by further removing sialic acids from the cell surface. These cleavages prevent self-aggregation and ensure the efficient spread of the progeny virus from cell to cell. Otherwise, infection would be limited to one round of replication. Described as a receptor-destroying enzyme because it cleaves a terminal sialic acid from the cellular receptors. May facilitate viral invasion of the upper airways by cleaving the sialic acid moieties on the mucin of the airway epithelial cells. Likely to plays a role in the budding process through its association with lipid rafts during intracellular transport. May additionally display a raft-association independent effect on budding. Plays a role in the determination of host range restriction on replication and virulence. Sialidase activity in late endosome/lysosome traffic seems to enhance virus replication. The chain is Neuraminidase from Influenza A virus (strain A/Malaysia:Malaya/302/1954 H1N1).